A 417-amino-acid chain; its full sequence is Alpha-galactosidase (417 aa).

An N-terminal signal peptide occupies residues 1–55 (MARASSSSSPPSPRLLLLLLVAVAATLLPEAAALGNFTAESRGARWRSRRARRRA). Residues Trp71, Asp106, Asp107, Cys156, Lys183, Asp185, Trp219, Arg236, and Asp240 each contribute to the alpha-D-galactose site. Cystine bridges form between Cys76–Cys108 and Cys156–Cys187. The active-site Nucleophile is the Asp185. The Proton donor role is filled by Asp240.

Belongs to the glycosyl hydrolase 27 family.

The enzyme catalyses Hydrolysis of terminal, non-reducing alpha-D-galactose residues in alpha-D-galactosides, including galactose oligosaccharides, galactomannans and galactolipids.. The catalysed reaction is melibiose + H2O = D-galactose + D-glucose. It carries out the reaction raffinose + H2O = sucrose + D-galactose. It catalyses the reaction stachyose + H2O = raffinose + D-galactose. The enzyme catalyses alpha-D-Gal-(1-&gt;6)-beta-D-Man-(1-&gt;4)-beta-D-Man-(1-&gt;4)-D-Man + H2O = beta-D-Man-(1-&gt;4)-beta-D-Man-(1-&gt;4)-D-Man + D-galactose. The catalysed reaction is beta-D-Man-(1-&gt;4)-[alpha-D-Gal-(1-&gt;6)]-beta-D-Man-(1-&gt;4)-beta-D-Man-(1-&gt;4)-D-Man + H2O = beta-D-Man-(1-&gt;4)-beta-D-Man-(1-&gt;4)-beta-D-Man-(1-&gt;4)-D-Man + D-galactose. Its activity is regulated as follows. 1 mM Hg(2+) and Ag(2+) decrease activity by 98% and 96%, respectively. 1 mM Para-chloromercuribenzoic acid (PCMB) completely inhibits enzymatic activity. Hydrolyzes melibiose, raffinose and stachyose in the following decreasing order of reactivity: raffinose, melibiose, stachyose. Acts on both the terminal alpha-galactosyl residue and the side-chain alpha-galactosyl residue of the galactomanno-oligosaccharides. The protein is Alpha-galactosidase of Oryza sativa subsp. japonica (Rice).